The primary structure comprises 349 residues: DNA polymerase IV (349 aa).

The region spanning 7–188 is the UmuC domain; the sequence is IIHIDMDYFF…LPVKKLFGVG (182 aa). The Mg(2+) site is built by Asp11 and Asp106. Glu107 is an active-site residue.

The protein belongs to the DNA polymerase type-Y family. Monomer. The cofactor is Mg(2+).

The protein localises to the cytoplasm. It carries out the reaction DNA(n) + a 2'-deoxyribonucleoside 5'-triphosphate = DNA(n+1) + diphosphate. Its function is as follows. Poorly processive, error-prone DNA polymerase involved in untargeted mutagenesis. Copies undamaged DNA at stalled replication forks, which arise in vivo from mismatched or misaligned primer ends. These misaligned primers can be extended by PolIV. Exhibits no 3'-5' exonuclease (proofreading) activity. May be involved in translesional synthesis, in conjunction with the beta clamp from PolIII. In Francisella tularensis subsp. novicida (strain U112), this protein is DNA polymerase IV.